A 303-amino-acid polypeptide reads, in one-letter code: N-acetyl-D-glucosamine kinase (303 aa).

ATP is bound by residues 4-11 (GFDIGGTK) and 133-140 (GVGGGLIF). 4 residues coordinate Zn(2+): His-157, Cys-177, Cys-179, and Cys-184.

The protein belongs to the ROK (NagC/XylR) family. NagK subfamily.

The catalysed reaction is N-acetyl-D-glucosamine + ATP = N-acetyl-D-glucosamine 6-phosphate + ADP + H(+). It participates in cell wall biogenesis; peptidoglycan recycling. Its function is as follows. Catalyzes the phosphorylation of N-acetyl-D-glucosamine (GlcNAc) derived from cell-wall degradation, yielding GlcNAc-6-P. This chain is N-acetyl-D-glucosamine kinase, found in Escherichia coli O9:H4 (strain HS).